Consider the following 499-residue polypeptide: Lysine--tRNA ligase (499 aa).

Residues E408 and E415 each coordinate Mg(2+).

Belongs to the class-II aminoacyl-tRNA synthetase family. Homodimer. It depends on Mg(2+) as a cofactor.

It localises to the cytoplasm. The enzyme catalyses tRNA(Lys) + L-lysine + ATP = L-lysyl-tRNA(Lys) + AMP + diphosphate. This chain is Lysine--tRNA ligase, found in Bacillus cereus (strain ATCC 10987 / NRS 248).